The following is a 210-amino-acid chain: Thymidylate kinase (210 aa).

Glycine 10–serine 17 lines the ATP pocket.

Belongs to the thymidylate kinase family.

It carries out the reaction dTMP + ATP = dTDP + ADP. Functionally, phosphorylation of dTMP to form dTDP in both de novo and salvage pathways of dTTP synthesis. The sequence is that of Thymidylate kinase from Ectopseudomonas mendocina (strain ymp) (Pseudomonas mendocina).